A 566-amino-acid polypeptide reads, in one-letter code: Chondroitin sulfate proteoglycan 5 (566 aa).

An N-terminal signal peptide occupies residues 1 to 30; it reads MGRAGGGGPGRGPPPLLLFLGAALVLASGA. Over 31–423 the chain is Extracellular; sequence VPAREAGSAV…SIITDFQVMC (393 aa). The O-linked (Xyl...) (chondroitin sulfate) serine glycan is linked to Ser-38. The disordered stretch occupies residues 39–82; that stretch reads AVEAEELVKGSPAWEPPANDTREEAGPPAAGEDEASWTAPGGEL. Asn-57 is a glycosylation site (N-linked (GlcNAc...) asparagine). A glycan (O-linked (Xyl...) (chondroitin sulfate) serine) is linked at Ser-117. Disordered regions lie at residues 143–202, 215–248, and 262–354; these read IPEA…LEPQ, GLDGEGRGADLGSFPGSPGTSENHPDTEGETPSW, and ESDF…ASSE. An O-linked (GalNAc...) serine glycan is attached at Ser-165. Residues 264-301 are interaction with TNC and TNR; the sequence is DFYPTTSFYDDLDEEEEEEEDDKDAVGGGDLEDENELL. The span at 273-286 shows a compositional bias: acidic residues; sequence DDLDEEEEEEEDDK. In terms of domain architecture, EGF-like spans 371-413; the sequence is RSVCDLFPSYCHNGGQCYLVENIGAFCRCNTQDYIWHKGMRCE. Disulfide bonds link Cys-374-Cys-387, Cys-381-Cys-397, and Cys-399-Cys-412. A helical membrane pass occupies residues 424-444; the sequence is VAVGSAALVLLLLFMMTVFFA. The tract at residues 442–460 is interaction with GOPC; it reads FFAKKLYLLKTENTKLRRT. Residues 445–566 lie on the Cytoplasmic side of the membrane; the sequence is KKLYLLKTEN…DVNCLQNNLT (122 aa). Phosphoserine occurs at positions 467, 475, 483, and 543.

In terms of assembly, binds TNR and probably TNC. Interacts with ERBB3 and GOPC. Interacts with MDK; this interaction is independent of the presence of chondroitin sulfate chains and promotes elongation of oligodendroglial precursor-like cells. N-glycosylated. In terms of processing, O-glycosylated; contains chondroitin sulfate glycans. Part-time proteoglycan, expressed in part as a proteoglycan exhibiting chondroitin sulfate glycans and in part as a non-proteoglycan form. The relative amount of both forms depends on tissues and tissue maturation. Post-translationally, phosphorylated; in intracellular and extracellular parts. As to expression, detected in cerebrospinal fluid (at protein level). Detected in urine (at protein level). Expressed in brain (at protein level).

It localises to the cell membrane. It is found in the synaptic cell membrane. Its subcellular location is the endoplasmic reticulum membrane. The protein localises to the golgi apparatus membrane. The protein resides in the cell surface. It localises to the secreted. Functionally, may function as a growth and differentiation factor involved in neuritogenesis. May induce ERBB3 activation. This chain is Chondroitin sulfate proteoglycan 5 (CSPG5), found in Homo sapiens (Human).